The sequence spans 170 residues: Cathelicidin antimicrobial peptide (170 aa).

Positions 1–30 (MKTQRDGHSLGRWSLVLLLLGLVMPLAIIA) are cleaved as a signal peptide. The propeptide at 31 to 131 (QVLSYKEAVL…DISCDKDNKR (101 aa)) is cathelin-like domain (CLD). Cystine bridges form between cysteine 86–cysteine 97 and cysteine 108–cysteine 125. An active core region spans residues 150-162 (FKRIVQRIKDFLR).

It belongs to the cathelicidin family. As to quaternary structure, monomer, homodimer or homotrimer (in vitro). Oligomerizes as tetra- or hexamer in solution (in vitro). Post-translationally, the N-terminus is blocked. Proteolytically cleaved by proteinase PRTN3 into antibacterial peptide LL-37. Proteolytically cleaved by cathepsin CTSG and neutrophil elastase ELANE. In terms of processing, resistant to proteolytic degradation in solution, and when bound to both zwitterionic (mimicking mammalian membranes) and negatively charged membranes (mimicking bacterial membranes). Post-translationally, after secretion onto the skin surface, the CAMP gene product is processed by a serine protease-dependent mechanism into multiple novel antimicrobial peptides distinct from and shorter than cathelicidin LL-37, such as peptides KR-20 (residues 151-170), LL-23 (residues 134-156), LL-29 (residues 134-162), KS-30 (residues 141-170), RK-31 (residues 140-170) and FF-33 (residues 138-170). The peptides act synergistically, killing bacteria at lower concentrations when present together, and maintain activity at increased salt condition. Expressed in neutrophilic granulocytes (at protein level). Expressed in bone marrow. As to expression, expressed in granulocytes (at protein level). Expressed by the eccrine apparatus and secreted into sweat on skin (at protein level). In terms of tissue distribution, expressed in bone marrow and testis.

Its subcellular location is the secreted. It is found in the vesicle. Its function is as follows. Antimicrobial protein that is an integral component of the innate immune system. Binds to bacterial lipopolysaccharides (LPS). Acts via neutrophil N-formyl peptide receptors to enhance the release of CXCL2. Postsecretory processing generates multiple cathelicidin antimicrobial peptides with various lengths which act as a topical antimicrobial defense in sweat on skin. The unprocessed precursor form, cathelicidin antimicrobial peptide, inhibits the growth of Gram-negative E.coli and E.aerogenes with efficiencies comparable to that of the mature peptide LL-37 (in vitro). In terms of biological role, antimicrobial peptide that is an integral component of the innate immune system. Binds to bacterial lipopolysaccharides (LPS). Causes membrane permeabilization by forming transmembrane pores (in vitro). Causes lysis of E.coli. Exhibits antimicrobial activity against Gram-negative bacteria such as P.aeruginosa, S.typhimurium, E.aerogenes, E.coli and P.syringae, Gram-positive bacteria such as L.monocytogenes, S.epidermidis, S.pyogenes and S.aureus, as well as vancomycin-resistant enterococci (in vitro). Exhibits antimicrobial activity against methicillin-resistant S.aureus, P.mirabilis, and C.albicans in low-salt media, but not in media containing 100 mM NaCl (in vitro). Forms chiral supramolecular assemblies with quinolone signal (PQS) molecules of P.aeruginosa, which may lead to interference of bacterial quorum signaling and perturbance of bacterial biofilm formation. May form supramolecular fiber-like assemblies on bacterial membranes. Induces cytokine and chemokine production as well as TNF/TNFA and CSF2/GMCSF production in normal human keratinocytes. Exhibits hemolytic activity against red blood cells. Functionally, exhibits antimicrobial activity against E.coli and B.megaterium (in vitro). Acts synergistically with peptides KS-30 and KR-31, killing bacteria such as S.aureus, E.coli and C.albicans at lower concentrations when present together, and maintains activity at increased salt condition. Does not have the ability to stimulate CXCL8/IL8 release from keratinocytes. Its function is as follows. Poorly active (MIC &gt; 150 uM) against E.coli strain K12. Is able to induce the pro-inflammatory cytokine TNF/TNFA or the chemokine CCL2/MCP1. In terms of biological role, moderately antibacterial. Functionally, moderately antibacterial. Acts synergistically with peptides KR-20 and KR-31, killing bacteria such as S.aureus, E.coli and C.albicans at lower concentrations when present together, and maintain activity at increased salt condition. Does not have the ability to stimulate CXCL8/IL8 release from keratinocytes. Acts synergistically with peptides KS-30 and KR-31, killing bacteria such as S.aureus, E.coli and C.albicans at lower concentrations when present together, and maintain activity at increased salt condition. Does not have the ability to stimulate CXCL8/IL8 release from keratinocytes. Its function is as follows. Inhibits the growth of E.coli and B.megaterium and exhibits hemolytic activity against human red blood cells. This is Cathelicidin antimicrobial peptide from Homo sapiens (Human).